The chain runs to 142 residues: Large ribosomal subunit protein uL11 (142 aa).

Belongs to the universal ribosomal protein uL11 family. As to quaternary structure, part of the ribosomal stalk of the 50S ribosomal subunit. Interacts with L10 and the large rRNA to form the base of the stalk. L10 forms an elongated spine to which L12 dimers bind in a sequential fashion forming a multimeric L10(L12)X complex. Post-translationally, one or more lysine residues are methylated.

Forms part of the ribosomal stalk which helps the ribosome interact with GTP-bound translation factors. This is Large ribosomal subunit protein uL11 from Shigella boydii serotype 4 (strain Sb227).